A 218-amino-acid chain; its full sequence is Adenylate kinase (218 aa).

Position 10–15 (10–15) interacts with ATP; sequence GAGKGT. The NMP stretch occupies residues 30-59; sequence STGDMLRAAVKAGTPLGIEAKKVMDAGGLM. AMP contacts are provided by residues Thr31, Arg36, 57–59, 85–88, and Gln92; these read GLM and GYPR. Residues 122-159 form an LID region; sequence GRWVHLASGRSYNTQSNPPKVAGQDDITGEALIQRDDD. ATP is bound by residues Arg123 and 132 to 133; that span reads SY. Arg156 and Arg167 together coordinate AMP. Gly203 is an ATP binding site.

The protein belongs to the adenylate kinase family. Monomer.

It localises to the cytoplasm. The enzyme catalyses AMP + ATP = 2 ADP. It participates in purine metabolism; AMP biosynthesis via salvage pathway; AMP from ADP: step 1/1. Catalyzes the reversible transfer of the terminal phosphate group between ATP and AMP. Plays an important role in cellular energy homeostasis and in adenine nucleotide metabolism. The polypeptide is Adenylate kinase (Bordetella avium (strain 197N)).